The sequence spans 115 residues: U3-lycotoxin-Ls1k (115 aa).

The N-terminal stretch at 1–20 (MKFVLLFGVLLVTLFSYSSA) is a signal peptide. Residues 21–44 (EMLDDFDQADEDELLSLIEKEEAR) constitute a propeptide that is removed on maturation. 4 disulfide bridges follow: Cys-48–Cys-63, Cys-55–Cys-72, Cys-62–Cys-87, and Cys-74–Cys-85.

It belongs to the neurotoxin 19 (CSTX) family. 01 subfamily. In terms of tissue distribution, expressed by the venom gland.

Its subcellular location is the secreted. The protein is U3-lycotoxin-Ls1k of Lycosa singoriensis (Wolf spider).